The primary structure comprises 228 residues: 2,3-bisphosphoglycerate-dependent phosphoglycerate mutase (228 aa).

Residues 8–15 (RHGQSEWN), 21–22 (TG), Arg-60, 87–90 (ERHY), Lys-98, 114–115 (RR), and 183–184 (GN) contribute to the substrate site. The Tele-phosphohistidine intermediate role is filled by His-9. Catalysis depends on Glu-87, which acts as the Proton donor/acceptor.

The protein belongs to the phosphoglycerate mutase family. BPG-dependent PGAM subfamily.

The enzyme catalyses (2R)-2-phosphoglycerate = (2R)-3-phosphoglycerate. It participates in carbohydrate degradation; glycolysis; pyruvate from D-glyceraldehyde 3-phosphate: step 3/5. Functionally, catalyzes the interconversion of 2-phosphoglycerate and 3-phosphoglycerate. This is 2,3-bisphosphoglycerate-dependent phosphoglycerate mutase from Staphylococcus aureus (strain Mu3 / ATCC 700698).